The chain runs to 86 residues: Conotoxin Lt15a (86 aa).

The first 23 residues, M1–S23, serve as a signal peptide directing secretion. Residues D24–R49 constitute a propeptide that is removed on maturation.

This sequence belongs to the conotoxin O2 superfamily. Post-translationally, contains 4 disulfide bonds. As to expression, expressed by the venom duct.

The protein resides in the secreted. In Conus litteratus (Lettered cone), this protein is Conotoxin Lt15a.